Here is a 414-residue protein sequence, read N- to C-terminus: MRVDRQKRNNFTYRQTVYIILTFYIVYRGKCNSTDTNNSTSTSDSTVSDTSVYSTPNLPSTFFTTLDTSTGSQISTTSNTISSTTNTLAASSITTLNTSTNTTSYTASTLTALSSTHTNSPILSNNATLYTTSLDNTTTDITSSESSINASTIHNTTYSPVTSIAVNCTVAANETNNSSSKNCQQDIGTIRVKSTTLTAEEGKNITIQGNSTWNCPNVVWYRHYNWSTHGHHIYPNRRYQTPTYQHKILTSHPICHPDVSSPAAYHDLCRSCNKTELRIYDLNTTNSGRYSRRCYKEYNHDGPHEDENFGLTVNPRNDTDNHTTPLCPRYVGTQSEEDEDDDYTLSTITNNNMRKTSHRDISHGTRTTWALTLICIACILLFFVRRALNKRYRPLRDDISESSFVVRYHPEHED.

The chain crosses the membrane as a helical span at residues 367–384 (TTWALTLICIACILLFFV).

The protein resides in the virion membrane. This is an uncharacterized protein from Human cytomegalovirus (strain Merlin) (HHV-5).